The sequence spans 212 residues: Methylthioribulose-1-phosphate dehydratase (212 aa).

Residues histidine 97 and histidine 99 each contribute to the Zn(2+) site.

The protein belongs to the aldolase class II family. MtnB subfamily. As to quaternary structure, homotetramer. Zn(2+) serves as cofactor.

The enzyme catalyses 5-(methylsulfanyl)-D-ribulose 1-phosphate = 5-methylsulfanyl-2,3-dioxopentyl phosphate + H2O. It participates in amino-acid biosynthesis; L-methionine biosynthesis via salvage pathway; L-methionine from S-methyl-5-thio-alpha-D-ribose 1-phosphate: step 2/6. Functionally, catalyzes the dehydration of methylthioribulose-1-phosphate (MTRu-1-P) into 2,3-diketo-5-methylthiopentyl-1-phosphate (DK-MTP-1-P). The chain is Methylthioribulose-1-phosphate dehydratase from Bacillus thuringiensis subsp. konkukian (strain 97-27).